A 244-amino-acid chain; its full sequence is ATP synthase subunit 4, mitochondrial (244 aa).

Residues 1–36 (MSSKLFCLRSFPSVQRTAWQRLVLPSTRKFSLTPTT) constitute a mitochondrion transit peptide.

This sequence belongs to the eukaryotic ATPase B chain family. As to quaternary structure, F-type ATPases have 2 components, CF(1) - the catalytic core - and CF(0) - the membrane proton channel. In yeast, the dimeric form of ATP synthase consists of 17 polypeptides: alpha, beta, gamma, delta, epsilon, 4 (B), 5 (OSCP), 6 (A), 8, 9 (C), d, E (Tim11), f, g, h, i/j and k.

It localises to the mitochondrion. It is found in the mitochondrion inner membrane. In terms of biological role, mitochondrial membrane ATP synthase (F(1)F(0) ATP synthase or Complex V) produces ATP from ADP in the presence of a proton gradient across the membrane which is generated by electron transport complexes of the respiratory chain. F-type ATPases consist of two structural domains, F(1) - containing the extramembraneous catalytic core, and F(0) - containing the membrane proton channel, linked together by a central stalk and a peripheral stalk. During catalysis, ATP synthesis in the catalytic domain of F(1) is coupled via a rotary mechanism of the central stalk subunits to proton translocation. Part of the complex F(0) domain and the peripheric stalk, which acts as a stator to hold the catalytic alpha(3)beta(3) subcomplex and subunit a/ATP6 static relative to the rotary elements. This is ATP synthase subunit 4, mitochondrial (atp4) from Schizosaccharomyces pombe (strain 972 / ATCC 24843) (Fission yeast).